The chain runs to 353 residues: 4-hydroxy-3-methylbut-2-en-1-yl diphosphate synthase (flavodoxin) (353 aa).

[4Fe-4S] cluster-binding residues include cysteine 263, cysteine 266, cysteine 298, and glutamate 305.

Belongs to the IspG family. [4Fe-4S] cluster serves as cofactor.

The enzyme catalyses (2E)-4-hydroxy-3-methylbut-2-enyl diphosphate + oxidized [flavodoxin] + H2O + 2 H(+) = 2-C-methyl-D-erythritol 2,4-cyclic diphosphate + reduced [flavodoxin]. Its pathway is isoprenoid biosynthesis; isopentenyl diphosphate biosynthesis via DXP pathway; isopentenyl diphosphate from 1-deoxy-D-xylulose 5-phosphate: step 5/6. Its function is as follows. Converts 2C-methyl-D-erythritol 2,4-cyclodiphosphate (ME-2,4cPP) into 1-hydroxy-2-methyl-2-(E)-butenyl 4-diphosphate. The protein is 4-hydroxy-3-methylbut-2-en-1-yl diphosphate synthase (flavodoxin) of Geobacter sulfurreducens (strain ATCC 51573 / DSM 12127 / PCA).